The following is a 118-amino-acid chain: Thioredoxin H-type 2 (118 aa).

In terms of domain architecture, Thioredoxin spans 2-113 (AEEGQVIGVH…LQQTIAKHIS (112 aa)). Catalysis depends on nucleophile residues Cys-39 and Cys-42. An intrachain disulfide couples Cys-39 to Cys-42.

The protein belongs to the thioredoxin family. Plant H-type subfamily.

The protein resides in the cytoplasm. Its function is as follows. Participates in various redox reactions through the reversible oxidation of the active center dithiol to a disulfide. The H form is known to activate a number of cytosolic enzymes. This chain is Thioredoxin H-type 2, found in Nicotiana tabacum (Common tobacco).